A 333-amino-acid chain; its full sequence is NADH-quinone oxidoreductase subunit H (333 aa).

A run of 8 helical transmembrane segments spans residues V17 to I37, V91 to V111, I116 to G136, I156 to F176, M188 to V208, Y244 to A264, F272 to L292, and W310 to M330.

This sequence belongs to the complex I subunit 1 family. In terms of assembly, NDH-1 is composed of 14 different subunits. Subunits NuoA, H, J, K, L, M, N constitute the membrane sector of the complex.

The protein resides in the cell inner membrane. It catalyses the reaction a quinone + NADH + 5 H(+)(in) = a quinol + NAD(+) + 4 H(+)(out). Its function is as follows. NDH-1 shuttles electrons from NADH, via FMN and iron-sulfur (Fe-S) centers, to quinones in the respiratory chain. The immediate electron acceptor for the enzyme in this species is believed to be ubiquinone. Couples the redox reaction to proton translocation (for every two electrons transferred, four hydrogen ions are translocated across the cytoplasmic membrane), and thus conserves the redox energy in a proton gradient. This subunit may bind ubiquinone. The chain is NADH-quinone oxidoreductase subunit H from Acinetobacter baylyi (strain ATCC 33305 / BD413 / ADP1).